Here is a 156-residue protein sequence, read N- to C-terminus: Small ribosomal subunit protein uS7 (156 aa).

Belongs to the universal ribosomal protein uS7 family. Part of the 30S ribosomal subunit. Contacts proteins S9 and S11.

Its function is as follows. One of the primary rRNA binding proteins, it binds directly to 16S rRNA where it nucleates assembly of the head domain of the 30S subunit. Is located at the subunit interface close to the decoding center, probably blocks exit of the E-site tRNA. This chain is Small ribosomal subunit protein uS7, found in Thermoanaerobacter pseudethanolicus (strain ATCC 33223 / 39E) (Clostridium thermohydrosulfuricum).